Reading from the N-terminus, the 538-residue chain is Neutral protease B (538 aa).

Residues 1–28 form the signal peptide; the sequence is MRNLTKTSLLLAGLCTAAQMVFVTHASA. The propeptide at 29–223 is activation peptide; sequence EESIEYDHTY…VIESFNAIHE (195 aa). Position 365 (D365) interacts with Ca(2+). H369 lines the Zn(2+) pocket. E370 is an active-site residue. Residues H373 and E393 each contribute to the Zn(2+) site. D404, D406, D407, E409, E412, Y415, T416, I419, and D422 together coordinate Ca(2+). The disordered stretch occupies residues 421 to 441; the sequence is GDSLRSLEDPSKQGNPDHYSN. The Proton donor role is filled by H453.

It belongs to the peptidase M4 family. Zn(2+) is required as a cofactor.

It localises to the secreted. Its activity is regulated as follows. Protease activity can be inhibited in vitro by either a zinc specific chelator, 1,10-phenanthroline, or a metal chelator, EDTA. The enzyme is resistant to phenylmethylsulfonyl fluoride and iodoacetic acid. Functionally, protease able to cleave casein in vitro. This chain is Neutral protease B, found in Bacillus subtilis (strain 168).